We begin with the raw amino-acid sequence, 331 residues long: Ketol-acid reductoisomerase (NADP(+)) (331 aa).

Residues 2 to 181 (IKKYYESDAD…GATRAVVFET (180 aa)) form the KARI N-terminal Rossmann domain. Residues 25–28 (YGSQ), Arg-48, Ser-52, and 82–85 (DESQ) contribute to the NADP(+) site. Residue His-107 is part of the active site. Gly-133 contacts NADP(+). A KARI C-terminal knotted domain is found at 182 to 327 (TFREETETDL…AEIRGLMPQF (146 aa)). 4 residues coordinate Mg(2+): Asp-190, Glu-194, Glu-226, and Glu-230. Ser-251 lines the substrate pocket.

This sequence belongs to the ketol-acid reductoisomerase family. Mg(2+) serves as cofactor.

It catalyses the reaction (2R)-2,3-dihydroxy-3-methylbutanoate + NADP(+) = (2S)-2-acetolactate + NADPH + H(+). The catalysed reaction is (2R,3R)-2,3-dihydroxy-3-methylpentanoate + NADP(+) = (S)-2-ethyl-2-hydroxy-3-oxobutanoate + NADPH + H(+). Its pathway is amino-acid biosynthesis; L-isoleucine biosynthesis; L-isoleucine from 2-oxobutanoate: step 2/4. The protein operates within amino-acid biosynthesis; L-valine biosynthesis; L-valine from pyruvate: step 2/4. Functionally, involved in the biosynthesis of branched-chain amino acids (BCAA). Catalyzes an alkyl-migration followed by a ketol-acid reduction of (S)-2-acetolactate (S2AL) to yield (R)-2,3-dihydroxy-isovalerate. In the isomerase reaction, S2AL is rearranged via a Mg-dependent methyl migration to produce 3-hydroxy-3-methyl-2-ketobutyrate (HMKB). In the reductase reaction, this 2-ketoacid undergoes a metal-dependent reduction by NADPH to yield (R)-2,3-dihydroxy-isovalerate. This chain is Ketol-acid reductoisomerase (NADP(+)), found in Methanosphaerula palustris (strain ATCC BAA-1556 / DSM 19958 / E1-9c).